The primary structure comprises 150 residues: Large ribosomal subunit protein bL9 (150 aa).

This sequence belongs to the bacterial ribosomal protein bL9 family.

Binds to the 23S rRNA. In Thioalkalivibrio sulfidiphilus (strain HL-EbGR7), this protein is Large ribosomal subunit protein bL9.